The sequence spans 259 residues: MPPTELEKKRGEYNQIAIDAQKQHAPTDEKREAKRKQLMDRVGGDWQALDPDHHDAIKVAMDDAMRKILSEEEIVHRTKHFGDLLDSGRLKSLFEVGFSAGGDTPTERALLEDAWFGAGKVPPIYSAIEFNGAPTAGLGMYGGTKLYMKDSVKDRVTVTIGDSLMSSWDVFPGRPGDGVGLWASLSKIEGLVDPSKTREENMQAVYDSFKKYGTLDGFIEAQIHGGVLVEDIKKVVFTQPPSPIFTDKLDELGIPWEVQ.

2 stretches are compositionally biased toward basic and acidic residues: residues 1 to 12 and 21 to 36; these read MPPTELEKKRGE and QKQHAPTDEKREAKRK. Residues 1 to 36 form a disordered region; sequence MPPTELEKKRGEYNQIAIDAQKQHAPTDEKREAKRK.

This is Gene 2 protein (2) from Mycobacterium (Mycobacteriophage L5).